The primary structure comprises 122 residues: Large ribosomal subunit protein eL8 (122 aa).

This sequence belongs to the eukaryotic ribosomal protein eL8 family. As to quaternary structure, part of the 50S ribosomal subunit. Probably part of the RNase P complex.

It localises to the cytoplasm. In terms of biological role, multifunctional RNA-binding protein that recognizes the K-turn motif in ribosomal RNA, the RNA component of RNase P, box H/ACA, box C/D and box C'/D' sRNAs. The polypeptide is Large ribosomal subunit protein eL8 (Methanothrix thermoacetophila (strain DSM 6194 / JCM 14653 / NBRC 101360 / PT) (Methanosaeta thermophila)).